The following is a 209-amino-acid chain: NDR1/HIN1-like protein 1 (209 aa).

A helical membrane pass occupies residues 18–38; sequence IFWSIIFVLFIIFLTILLIWA. Asn-58 carries N-linked (GlcNAc...) asparagine glycosylation.

In terms of tissue distribution, expressed in rosette leaves, cauline leaves, stems, and siliques, and at lower levels in roots and flowers.

The protein resides in the cell membrane. May play a role in plant immunity. The protein is NDR1/HIN1-like protein 1 of Arabidopsis thaliana (Mouse-ear cress).